Consider the following 303-residue polypeptide: UDP-3-O-acyl-N-acetylglucosamine deacetylase (303 aa).

Residues His-78, His-237, and Asp-241 each contribute to the Zn(2+) site. The Proton donor role is filled by His-264.

It belongs to the LpxC family. It depends on Zn(2+) as a cofactor.

It catalyses the reaction a UDP-3-O-[(3R)-3-hydroxyacyl]-N-acetyl-alpha-D-glucosamine + H2O = a UDP-3-O-[(3R)-3-hydroxyacyl]-alpha-D-glucosamine + acetate. The protein operates within glycolipid biosynthesis; lipid IV(A) biosynthesis; lipid IV(A) from (3R)-3-hydroxytetradecanoyl-[acyl-carrier-protein] and UDP-N-acetyl-alpha-D-glucosamine: step 2/6. Its function is as follows. Catalyzes the hydrolysis of UDP-3-O-myristoyl-N-acetylglucosamine to form UDP-3-O-myristoylglucosamine and acetate, the committed step in lipid A biosynthesis. The polypeptide is UDP-3-O-acyl-N-acetylglucosamine deacetylase (Azotobacter vinelandii (strain DJ / ATCC BAA-1303)).